We begin with the raw amino-acid sequence, 316 residues long: Acetyl-coenzyme A carboxylase carboxyl transferase subunit alpha (316 aa).

The CoA carboxyltransferase C-terminal domain maps to Glu-35–Asp-292.

The protein belongs to the AccA family. In terms of assembly, acetyl-CoA carboxylase is a heterohexamer composed of biotin carboxyl carrier protein (AccB), biotin carboxylase (AccC) and two subunits each of ACCase subunit alpha (AccA) and ACCase subunit beta (AccD).

Its subcellular location is the cytoplasm. It carries out the reaction N(6)-carboxybiotinyl-L-lysyl-[protein] + acetyl-CoA = N(6)-biotinyl-L-lysyl-[protein] + malonyl-CoA. It functions in the pathway lipid metabolism; malonyl-CoA biosynthesis; malonyl-CoA from acetyl-CoA: step 1/1. Functionally, component of the acetyl coenzyme A carboxylase (ACC) complex. First, biotin carboxylase catalyzes the carboxylation of biotin on its carrier protein (BCCP) and then the CO(2) group is transferred by the carboxyltransferase to acetyl-CoA to form malonyl-CoA. This chain is Acetyl-coenzyme A carboxylase carboxyl transferase subunit alpha, found in Alkaliphilus oremlandii (strain OhILAs) (Clostridium oremlandii (strain OhILAs)).